We begin with the raw amino-acid sequence, 464 residues long: Cytoplasmic tRNA 2-thiolation protein 2 (464 aa).

The protein belongs to the CTU2/NCS2 family.

Its subcellular location is the cytoplasm. The protein operates within tRNA modification; 5-methoxycarbonylmethyl-2-thiouridine-tRNA biosynthesis. Plays a central role in 2-thiolation of mcm(5)S(2)U at tRNA wobble positions of tRNA(Lys), tRNA(Glu) and tRNA(Gln). May act by forming a heterodimer with NCS6/CTU1 that ligates sulfur from thiocarboxylated URM1 onto the uridine of tRNAs at wobble position. In Oryza sativa subsp. japonica (Rice), this protein is Cytoplasmic tRNA 2-thiolation protein 2.